We begin with the raw amino-acid sequence, 126 residues long: Large ribosomal subunit protein bL12 (126 aa).

It belongs to the bacterial ribosomal protein bL12 family. In terms of assembly, homodimer. Part of the ribosomal stalk of the 50S ribosomal subunit. Forms a multimeric L10(L12)X complex, where L10 forms an elongated spine to which 2 to 4 L12 dimers bind in a sequential fashion. Binds GTP-bound translation factors.

Forms part of the ribosomal stalk which helps the ribosome interact with GTP-bound translation factors. Is thus essential for accurate translation. The protein is Large ribosomal subunit protein bL12 of Helicobacter hepaticus (strain ATCC 51449 / 3B1).